Reading from the N-terminus, the 308-residue chain is Mitochondrial brown fat uncoupling protein 1 (308 aa).

The Mitochondrial intermembrane portion of the chain corresponds to 1–10; that stretch reads MVASAEADVP. The helical transmembrane segment at 11-33 threads the bilayer; sequence PPTMLVKIASAGLSACLADIITF. Solcar repeat units follow at residues 11-103, 112-202, and 211-296; these read PPTM…VQEY, ATLG…LKEA, and DDIP…LKKE. Residues 34 to 74 lie on the Mitochondrial matrix side of the membrane; the sequence is PLDTAKVRLQVQGERPNAPGVKYKGVLGTIATVAKTEGPLK. K57 serves as a coordination point for fatty acid 16:0. The helical transmembrane segment at 75–97 threads the bilayer; the sequence is LYGGLPAGIQRQISFASLRIGLY. Topologically, residues 98–117 are mitochondrial intermembrane; the sequence is DTVQEYFNAHRKTPATLGNK. Residues 118-134 form a helical membrane-spanning segment; the sequence is ISAGLMTGCVTVFIGQP. Topologically, residues 135 to 179 are mitochondrial matrix; it reads TEVAKVRMQAQSSLHWLKPRYSGTYNAYYVIVKTEGFLGLWKGTS. Residues 180–196 traverse the membrane as a helical segment; sequence LNLTRNVIINCTELVVY. The Mitochondrial intermembrane segment spans residues 197–213; it reads DVLKEALVKNNVLADDI. A helical membrane pass occupies residues 214 to 233; that stretch reads PCHLLAALTAGFCTTALASP. The Mitochondrial matrix segment spans residues 234–267; the sequence is VDVVKTRFINSPPGYYPHVHNCALNMLQKEGLRA. C255 is modified (cysteine sulfenic acid (-SOH)). Residues 268 to 290 traverse the membrane as a helical segment; that stretch reads FFKGFVPSFLRLGSWTVIMHVTF. K270 contributes to the fatty acid 16:0 binding site. Residues 291–308 lie on the Mitochondrial intermembrane side of the membrane; the sequence is EQLKKELMKSRQTVDCAT.

This sequence belongs to the mitochondrial carrier (TC 2.A.29) family. In terms of assembly, most probably functions as a monomer. Binds one purine nucleotide per monomer. However, has also been suggested to function as a homodimer or a homotetramer. Tightly associates with cardiolipin in the mitochondrion inner membrane; may stabilize and regulate its activity. Post-translationally, may undergo sulfenylation upon cold exposure. May increase the sensitivity of UCP1 thermogenic function to the activation by noradrenaline probably through structural effects. In terms of processing, may undergo ubiquitin-mediated proteasomal degradation. Brown adipose tissue.

It is found in the mitochondrion inner membrane. It catalyses the reaction H(+)(in) = H(+)(out). Has no constitutive proton transporter activity and has to be activated by long-chain fatty acids/LCFAs. Inhibited by purine nucleotides. Both purine nucleotides and LCFAs bind the cytosolic side of the transporter and directly compete to activate or inhibit it. Activated by noradrenaline and reactive oxygen species. Despite lacking canonical translational encoding for selenocysteine, a small pool of the protein has been observed to selectively incorporate selenocysteine at 'Cys-255'. Selenocysteine-modified protein is highly sensitive to redox modification and may constitute a pool of protein highly sensitive to activation by elevated levels of reactive oxygen species (ROS). Mitochondrial protein responsible for thermogenic respiration, a specialized capacity of brown adipose tissue and beige fat that participates in non-shivering adaptive thermogenesis to temperature and diet variations and more generally to the regulation of energy balance. Functions as a long-chain fatty acid/LCFA and proton symporter, simultaneously transporting one LCFA and one proton through the inner mitochondrial membrane. However, LCFAs remaining associated with the transporter via their hydrophobic tails, it results in an apparent transport of protons activated by LCFAs. Thereby, dissipates the mitochondrial proton gradient and converts the energy of substrate oxydation into heat instead of ATP. Regulates the production of reactive oxygen species/ROS by mitochondria. The protein is Mitochondrial brown fat uncoupling protein 1 of Suncus murinus (Asian house shrew).